The following is a 400-amino-acid chain: MGCDVSRPQRITVLGATGSIGLSTLDVIARHPDRYQAFALTGYSRIDELLALCVRHRPAFAVVPSTEAAVRLRASLAAAGCTTEVLEGEAGLCQVASAAEVDAVMAAIVGAAGLRPTLAAVEAGKKVLLANKEALVMSGALFMEAVRQKGAVLLPIDSEHNAIFQCMPGDYARGLSAVGVRRILLTASGGPFRETPVEALLDVTPEQACAHPNWSMGRKISVDSASMMNKGLELIEACWLFDAVPSKVEVVVHPQSVIHSLVDYVDGSVLAQLGNPDMRTPIANALAWPERIDSGVAPLDLFAIARLDFQAPDEQRFPCLRLARQAAEAGNSAPAVLNAANEVAVQAFLERRIRFPEIAGMIEQVLDQEPVVPLPSLDAVFAADQRARELSREWLRRHGR.

Thr-17, Gly-18, Ser-19, Ile-20, and Asn-131 together coordinate NADPH. Lys-132 contacts 1-deoxy-D-xylulose 5-phosphate. Glu-133 contacts NADPH. Asp-157 lines the Mn(2+) pocket. 1-deoxy-D-xylulose 5-phosphate contacts are provided by Ser-158, Glu-159, Ser-188, and His-211. Position 159 (Glu-159) interacts with Mn(2+). Gly-217 is a binding site for NADPH. Residues Ser-224, Asn-229, Lys-230, and Glu-233 each contribute to the 1-deoxy-D-xylulose 5-phosphate site. Glu-233 is a Mn(2+) binding site.

Belongs to the DXR family. Mg(2+) serves as cofactor. The cofactor is Mn(2+).

It catalyses the reaction 2-C-methyl-D-erythritol 4-phosphate + NADP(+) = 1-deoxy-D-xylulose 5-phosphate + NADPH + H(+). It functions in the pathway isoprenoid biosynthesis; isopentenyl diphosphate biosynthesis via DXP pathway; isopentenyl diphosphate from 1-deoxy-D-xylulose 5-phosphate: step 1/6. Functionally, catalyzes the NADPH-dependent rearrangement and reduction of 1-deoxy-D-xylulose-5-phosphate (DXP) to 2-C-methyl-D-erythritol 4-phosphate (MEP). The polypeptide is 1-deoxy-D-xylulose 5-phosphate reductoisomerase (Pseudomonas putida (strain ATCC 47054 / DSM 6125 / CFBP 8728 / NCIMB 11950 / KT2440)).